A 335-amino-acid polypeptide reads, in one-letter code: S-adenosylmethionine decarboxylase proenzyme (335 aa).

Active-site residues include Glu-12 and Glu-15. Ser-70 functions as the Schiff-base intermediate with substrate; via pyruvic acid in the catalytic mechanism. The residue at position 70 (Ser-70) is a Pyruvic acid (Ser); by autocatalysis. Cys-84 (proton donor; for catalytic activity) is an active-site residue. Active-site proton acceptor; for processing activity residues include Ser-231 and His-245.

Belongs to the eukaryotic AdoMetDC family. Requires pyruvate as cofactor. Post-translationally, is synthesized initially as an inactive proenzyme. Formation of the active enzyme involves a self-maturation process in which the active site pyruvoyl group is generated from an internal serine residue via an autocatalytic post-translational modification. Two non-identical subunits are generated from the proenzyme in this reaction, and the pyruvate is formed at the N-terminus of the alpha chain, which is derived from the carboxyl end of the proenzyme. The post-translation cleavage follows an unusual pathway, termed non-hydrolytic serinolysis, in which the side chain hydroxyl group of the serine supplies its oxygen atom to form the C-terminus of the beta chain, while the remainder of the serine residue undergoes an oxidative deamination to produce ammonia and the pyruvoyl group blocking the N-terminus of the alpha chain.

It carries out the reaction S-adenosyl-L-methionine + H(+) = S-adenosyl 3-(methylsulfanyl)propylamine + CO2. It functions in the pathway amine and polyamine biosynthesis; S-adenosylmethioninamine biosynthesis; S-adenosylmethioninamine from S-adenosyl-L-methionine: step 1/1. Essential for biosynthesis of the polyamines spermidine and spermine. Promotes maintenance and self-renewal of embryonic stem cells, by maintaining spermine levels. The chain is S-adenosylmethionine decarboxylase proenzyme (amd1) from Xenopus laevis (African clawed frog).